Here is a 224-residue protein sequence, read N- to C-terminus: Serum amyloid P-component (224 aa).

The N-terminal stretch at 1–20 is a signal peptide; that stretch reads MDKLLLWMFVFTSLLSEAFC. In terms of domain architecture, Pentraxin (PTX) spans 25–224; the sequence is KRKVFVFPRE…YVVIRPRVWD (200 aa). Asn52 is a glycosylation site (N-linked (GlcNAc...) asparagine). A disulfide bridge links Cys56 with Cys115. Residues Asp78, Asn79, Glu156, Gln157, Asp158, and Gln168 each contribute to the Ca(2+) site.

This sequence belongs to the pentraxin family. In terms of assembly, homopentamer. Pentraxin (or pentaxin) have a discoid arrangement of 5 non-covalently bound subunits. The cofactor is Ca(2+).

It is found in the secreted. The protein is Serum amyloid P-component (Apcs) of Mus musculus (Mouse).